The following is a 997-amino-acid chain: MLGLLRRLFDNNEREIARYYKQVVEPVNRLEAEVEKLPDLAAAYRELKEKHEKGASLDELLPMAFALTRESAKRYLGMRHFDVQLIGGAVLHEGKIAEMKTGEGKTLVATLAVALNALTGKGVHVVTVNDYLARRDAEWMGPVYRGLGLSVGVIQHASTPAERRKAYLADVTYVTNSELGFDYLRDNMAISPDQLVLRHDHPLHYAIIDEVDSILIDEARTPLIISGPAEKATDLYYKMAEIAKKLERGLPAEPGVRKEPTGDYTVEEKNRSVHLTLQGIAKAEKLLGIEGLFSPENMELAHMLIQAIRAKELYHRDRDYIVQDGQVIIVDEFTGRLMPGRRYGEGLHQAIEAKEGVRIERENQTLATITYQNFFRLYEKRAGMTGTAKTEEKEFQEIYGMDVVVVPTNRPVIRKDFPDVVYRTEKGKFYAVVEEIAEKYERGQPVLVGTISIEKSERLSQMLKEPRLYLPRLEMRLELFKKASQKQQGPEWERLRKLLERPAQLKDEDLAPFEGLIPPKGNLRTAWEGLKRAVHTLAVLRQGIPHQVLNAKHHAREAEIVAQAGRSKTVTIATNMAGRGTDIKLGGNPEYLAAALLEKEGFDRYEWKVELFIKKMVAGKEEEARALAQELGIREELLERIREIREECKQDEERVRALGGLFIIGTERHESRRIDNQLRGRAGRQGDPGGSRFYVSFDDDLMRLFASDRVIAMLDRMGFDDSEPIEHPMVTRSIERAQKRVEDRNFAIRKQLLQFDDVLSRQREVIYAQRRLILLGKDEEVKEAAIGMVEETVASLAENFLNPEVHPEDWDLEGLKATLLDTAPQLQDFPFAELRALKAEEAVERLVEAALKAYEAREAELSPPLMRAVERFVILNVVDNAWKEHLHNLDVLRQGIFLRGYGQKDPFQEYKIEATRLFNEMVAFIKSEVAKFLFRLKVEAEPVRPVREAPYVPVPEAKPEPSEVFGVERKRATPPPQPGLSRAERRRLMRQEKKRKK.

ATP-binding positions include Gln84, 102–106 (GEGKT), and Asp582. A disordered region spans residues 950–997 (PYVPVPEAKPEPSEVFGVERKRATPPPQPGLSRAERRRLMRQEKKRKK). Residues 957–971 (AKPEPSEVFGVERKR) show a composition bias toward basic and acidic residues. Residues 984–997 (ERRRLMRQEKKRKK) are compositionally biased toward basic residues.

It belongs to the SecA family. In terms of assembly, part of the essential Sec protein translocation apparatus which comprises SecA, SecYEG and auxiliary proteins SecDF. Other proteins may also be involved. Monomer and homodimer.

The protein localises to the cell inner membrane. It localises to the cytoplasm. It catalyses the reaction ATP + H2O + cellular proteinSide 1 = ADP + phosphate + cellular proteinSide 2.. In terms of biological role, part of the Sec protein translocase complex. Interacts with the SecYEG preprotein conducting channel. Has a central role in coupling the hydrolysis of ATP to the transfer of proteins into and across the cell membrane, serving as an ATP-driven molecular motor driving the stepwise translocation of polypeptide chains across the membrane. The sequence is that of Protein translocase subunit SecA from Thermus thermophilus (strain ATCC 27634 / DSM 579 / HB8).